A 574-amino-acid chain; its full sequence is ATP-dependent lipid A-core flippase (574 aa).

Transmembrane regions (helical) follow at residues 11-31 (LLSY…GFGI), 60-80 (WFPL…FMGG), 156-176 (YTNW…GVLV), and 244-264 (LNSP…VWLA). The ABC transmembrane type-1 domain occupies 23 to 304 (LLVLVGFGIN…LTDVNEKLQR (282 aa)). The region spanning 335–570 (VRFDHVTLEY…QGAYFQLHQR (236 aa)) is the ABC transporter domain. 368 to 375 (GRSGAGKT) lines the ATP pocket.

Belongs to the ABC transporter superfamily. Lipid exporter (TC 3.A.1.106) family. In terms of assembly, homodimer.

The protein localises to the cell inner membrane. It catalyses the reaction ATP + H2O + lipid A-core oligosaccharideSide 1 = ADP + phosphate + lipid A-core oligosaccharideSide 2.. In terms of biological role, involved in lipopolysaccharide (LPS) biosynthesis. Translocates lipid A-core from the inner to the outer leaflet of the inner membrane. Transmembrane domains (TMD) form a pore in the inner membrane and the ATP-binding domain (NBD) is responsible for energy generation. In Acinetobacter baylyi (strain ATCC 33305 / BD413 / ADP1), this protein is ATP-dependent lipid A-core flippase.